Here is a 576-residue protein sequence, read N- to C-terminus: Adenine deaminase (576 aa).

It belongs to the metallo-dependent hydrolases superfamily. Adenine deaminase family. It depends on Mn(2+) as a cofactor.

The enzyme catalyses adenine + H2O + H(+) = hypoxanthine + NH4(+). The protein is Adenine deaminase of Syntrophobacter fumaroxidans (strain DSM 10017 / MPOB).